The primary structure comprises 243 residues: Terpene cyclase dpmaB (243 aa).

Helical transmembrane passes span 11–31 (PGYL…GLGW), 51–71 (ALMP…IYPF), 112–132 (LPFI…ALAL), 141–161 (AFSA…QLLS), 169–189 (SYFL…QDVL), and 207–227 (IWFV…LWYV).

This sequence belongs to the paxB family.

The protein resides in the membrane. The protein operates within secondary metabolite biosynthesis; terpenoid biosynthesis. Functionally, terpene cyclase; part of the gene cluster that mediates the biosynthesis of the diterpenoid pyrones subglutinols A and B. The first step of the pathway is the synthesis of the alpha-pyrone moiety by the polyketide synthase dpmaA via condensation of one acetyl-CoA starter unit with 3 malonyl-CoA units and 2 methylations. The alpha-pyrone is then combined with geranylgeranyl pyrophosphate (GGPP) formed by the GGPP synthase dpmaD through the action of the prenyltransferase dpmaC to yield a linear alpha-pyrone diterpenoid. Subsequent steps in the diterpenoid pyrone biosynthetic pathway involve the decalin core formation, which is initiated by the epoxidation of the C10-C11 olefin by the FAD-dependent oxidoreductase dpmaE, and is followed by a cyclization cascade catalyzed by the terpene cyclase dpmaB. The dehydrogenase dpmaF is then involved in tetrahydrofuran (THF) ring formation at the C5 unit to complete the formation of subglutinols A and B. In Metarhizium anisopliae (Entomophthora anisopliae), this protein is Terpene cyclase dpmaB.